The sequence spans 200 residues: Probable molybdenum cofactor guanylyltransferase (200 aa).

GTP contacts are provided by residues 9 to 11 (LAG), lysine 21, aspartate 69, and aspartate 100. Position 100 (aspartate 100) interacts with Mg(2+).

It belongs to the MobA family. Requires Mg(2+) as cofactor.

Its subcellular location is the cytoplasm. It carries out the reaction Mo-molybdopterin + GTP + H(+) = Mo-molybdopterin guanine dinucleotide + diphosphate. Its function is as follows. Transfers a GMP moiety from GTP to Mo-molybdopterin (Mo-MPT) cofactor (Moco or molybdenum cofactor) to form Mo-molybdopterin guanine dinucleotide (Mo-MGD) cofactor. In Bacillus cereus (strain Q1), this protein is Probable molybdenum cofactor guanylyltransferase.